The chain runs to 322 residues: Cytochrome c biogenesis protein CcsA (322 aa).

7 helical membrane passes run 9-29 (IFTHISFSIVSIVIIIHLITL), 44-64 (GMIVTFLCLTGLLITRWIYSG), 71-91 (LYESLIFLSWSFSLIHIVPYF), 143-163 (MILSYAALLCGSLLSVALLVI), 226-246 (VISLGFIFLTIGILSGAVWAN), 255-275 (WDPKETWAFITWIVFAIYLHI), and 287-307 (AIVATLGFLIIWICYFGVNLL).

The protein belongs to the CcmF/CycK/Ccl1/NrfE/CcsA family. As to quaternary structure, may interact with Ccs1.

It is found in the plastid. The protein localises to the chloroplast thylakoid membrane. Its function is as follows. Required during biogenesis of c-type cytochromes (cytochrome c6 and cytochrome f) at the step of heme attachment. This is Cytochrome c biogenesis protein CcsA from Lactuca sativa (Garden lettuce).